A 439-amino-acid chain; its full sequence is Lipid-A-disaccharide synthase (439 aa).

Belongs to the LpxB family.

It catalyses the reaction a lipid X + a UDP-2-N,3-O-bis[(3R)-3-hydroxyacyl]-alpha-D-glucosamine = a lipid A disaccharide + UDP + H(+). It participates in bacterial outer membrane biogenesis; LPS lipid A biosynthesis. Functionally, condensation of UDP-2,3-diacylglucosamine and 2,3-diacylglucosamine-1-phosphate to form lipid A disaccharide, a precursor of lipid A, a phosphorylated glycolipid that anchors the lipopolysaccharide to the outer membrane of the cell. This chain is Lipid-A-disaccharide synthase, found in Xanthomonas axonopodis pv. citri (strain 306).